The chain runs to 87 residues: Large ribosomal subunit protein eL20 (87 aa).

This sequence belongs to the eukaryotic ribosomal protein eL20 family. Part of the 50S ribosomal subunit. Binds 23S rRNA.

This chain is Large ribosomal subunit protein eL20, found in Staphylothermus marinus (strain ATCC 43588 / DSM 3639 / JCM 9404 / F1).